The primary structure comprises 554 residues: L-ascorbate oxidase homolog (554 aa).

An N-terminal signal peptide occupies residues 1 to 21 (MGSGKVTFVALLLCLSVGVIA). Plastocyanin-like domains lie at 22 to 143 (EDPY…LNVH) and 196 to 296 (SAKV…AIIR). 3 N-linked (GlcNAc...) asparagine glycosylation sites follow: asparagine 31, asparagine 59, and asparagine 108. Cysteines 101 and 540 form a disulfide. N-linked (GlcNAc...) asparagine glycans are attached at residues asparagine 332, asparagine 352, and asparagine 423. Residues 411 to 521 (DPSKLTIATN…LGEQLYFSVL (111 aa)) form the Plastocyanin-like 3 domain.

Belongs to the multicopper oxidase family. In terms of tissue distribution, pollen.

It localises to the secreted. It is found in the extracellular space. Functionally, probable oxidoreductase that may be involved in pollen tube growth. This chain is L-ascorbate oxidase homolog, found in Nicotiana tabacum (Common tobacco).